A 679-amino-acid chain; its full sequence is Methionine--tRNA ligase (679 aa).

The 'HIGH' region signature appears at 14 to 24 (PYANGSIHLGH). The Zn(2+) site is built by cysteine 145, cysteine 148, cysteine 158, and cysteine 161. The 'KMSKS' region motif lies at 331 to 335 (KMSKS). Lysine 334 provides a ligand contact to ATP. The 103-residue stretch at 577 to 679 (AFAAVDLRIA…SGAKPGQRVK (103 aa)) folds into the tRNA-binding domain.

Belongs to the class-I aminoacyl-tRNA synthetase family. MetG type 1 subfamily. Homodimer. Zn(2+) serves as cofactor.

Its subcellular location is the cytoplasm. It carries out the reaction tRNA(Met) + L-methionine + ATP = L-methionyl-tRNA(Met) + AMP + diphosphate. Functionally, is required not only for elongation of protein synthesis but also for the initiation of all mRNA translation through initiator tRNA(fMet) aminoacylation. In Pseudomonas paraeruginosa (strain DSM 24068 / PA7) (Pseudomonas aeruginosa (strain PA7)), this protein is Methionine--tRNA ligase.